Reading from the N-terminus, the 175-residue chain is Thermoresistant gluconokinase (175 aa).

Residue 15–22 (GVSGSGKS) coordinates ATP.

The protein belongs to the gluconokinase GntK/GntV family.

The enzyme catalyses D-gluconate + ATP = 6-phospho-D-gluconate + ADP + H(+). It participates in carbohydrate acid metabolism; D-gluconate degradation. The sequence is that of Thermoresistant gluconokinase (gntK) from Escherichia coli (strain K12).